The sequence spans 203 residues: Large ribosomal subunit protein bL25 (203 aa).

The tract at residues 1-21 (MMENLQVNQREKKTRHSSRQC) is disordered. Over residues 12-21 (KKTRHSSRQC) the composition is skewed to basic residues.

This sequence belongs to the bacterial ribosomal protein bL25 family. CTC subfamily. In terms of assembly, part of the 50S ribosomal subunit; part of the 5S rRNA/L5/L18/L25 subcomplex. Contacts the 5S rRNA. Binds to the 5S rRNA independently of L5 and L18.

In terms of biological role, this is one of the proteins that binds to the 5S RNA in the ribosome where it forms part of the central protuberance. This is Large ribosomal subunit protein bL25 from Clostridium perfringens (strain 13 / Type A).